A 669-amino-acid polypeptide reads, in one-letter code: Translation factor GUF1, mitochondrial (669 aa).

A mitochondrion-targeting transit peptide spans 1-49 (MWTLAGQGWWRGRALAAWVTEAARKGLLWPHLAPARGTAAESRAPDRCY). The region spanning 66–247 (ENTRNFSIIA…AVIKRIPFPK (182 aa)) is the tr-type G domain. GTP is bound by residues 75–82 (AHVDHGKS), 140–144 (DTPGH), and 194–197 (NKID).

This sequence belongs to the TRAFAC class translation factor GTPase superfamily. Classic translation factor GTPase family. LepA subfamily.

It localises to the mitochondrion inner membrane. The catalysed reaction is GTP + H2O = GDP + phosphate + H(+). Functionally, promotes mitochondrial protein synthesis. May act as a fidelity factor of the translation reaction, by catalyzing a one-codon backward translocation of tRNAs on improperly translocated ribosomes. Binds to mitochondrial ribosomes in a GTP-dependent manner. This Bos taurus (Bovine) protein is Translation factor GUF1, mitochondrial.